Consider the following 307-residue polypeptide: 2-dehydropantoate 2-reductase (307 aa).

NADP(+) contacts are provided by residues G7–G12, N102, and A128. Substrate is bound at residue N102. Residue K184 is the Proton donor of the active site. Substrate is bound by residues N188, N192, and S255. E268 provides a ligand contact to NADP(+).

Belongs to the ketopantoate reductase family.

It is found in the cytoplasm. It carries out the reaction (R)-pantoate + NADP(+) = 2-dehydropantoate + NADPH + H(+). It functions in the pathway cofactor biosynthesis; (R)-pantothenate biosynthesis; (R)-pantoate from 3-methyl-2-oxobutanoate: step 2/2. In terms of biological role, catalyzes the NADPH-dependent reduction of ketopantoate into pantoic acid. This is 2-dehydropantoate 2-reductase (apbA) from Streptococcus pyogenes serotype M1.